Here is a 407-residue protein sequence, read N- to C-terminus: Tryptophan synthase beta chain (407 aa).

An N6-(pyridoxal phosphate)lysine modification is found at Lys-91.

It belongs to the TrpB family. In terms of assembly, tetramer of two alpha and two beta chains. The cofactor is pyridoxal 5'-phosphate.

It carries out the reaction (1S,2R)-1-C-(indol-3-yl)glycerol 3-phosphate + L-serine = D-glyceraldehyde 3-phosphate + L-tryptophan + H2O. It functions in the pathway amino-acid biosynthesis; L-tryptophan biosynthesis; L-tryptophan from chorismate: step 5/5. In terms of biological role, the beta subunit is responsible for the synthesis of L-tryptophan from indole and L-serine. The protein is Tryptophan synthase beta chain of Streptococcus pneumoniae (strain Taiwan19F-14).